Reading from the N-terminus, the 592-residue chain is Malic enzyme, hydrogenosomal (592 aa).

The N-terminal 27 residues, 1–27 (MLAPIQTIARPVSSILPATGALAAKRT), are a transit peptide targeting the hydrogenosome. Y134 acts as the Proton donor in catalysis. 182–205 (VTDGSRILGLGDLGAGGMQIPIGK) serves as a coordination point for NADP(+). Position 187 (R187) interacts with NAD(+). K205 functions as the Proton acceptor in the catalytic mechanism. Positions 276, 277, and 300 each coordinate a divalent metal cation. Position 300 (D300) interacts with NAD(+). 335-352 (GAGSSGVGVCETIVDCIV) provides a ligand contact to NADP(+). Residue N443 participates in NAD(+) binding.

Belongs to the malic enzymes family. Requires Mg(2+) as cofactor. Mn(2+) serves as cofactor.

It is found in the hydrogenosome. The enzyme catalyses (S)-malate + NADP(+) = pyruvate + CO2 + NADPH. The catalysed reaction is oxaloacetate + H(+) = pyruvate + CO2. The sequence is that of Malic enzyme, hydrogenosomal from Neocallimastix frontalis (Rumen fungus).